A 160-amino-acid chain; its full sequence is Cyanate hydratase (160 aa).

Active-site residues include Arg100, Glu103, and Ser126.

Belongs to the cyanase family.

The enzyme catalyses cyanate + hydrogencarbonate + 3 H(+) = NH4(+) + 2 CO2. Catalyzes the reaction of cyanate with bicarbonate to produce ammonia and carbon dioxide. The sequence is that of Cyanate hydratase from Aspergillus oryzae (strain ATCC 42149 / RIB 40) (Yellow koji mold).